A 159-amino-acid polypeptide reads, in one-letter code: Succinate dehydrogenase [ubiquinone] cytochrome b small subunit, mitochondrial (159 aa).

The transit peptide at 1–56 (MAVLWRLSAVCGALGGRALLLRTPVVRPAHISAFLQDRPIPEWCGVQHIHLSPSHH) directs the protein to the mitochondrion. At 57 to 63 (SGSKAAS) the chain is on the mitochondrial matrix side. Residues 64–85 (LHWTSERVVSVLLLGLLPAAYL) traverse the membrane as a helical segment. Topologically, residues 86-90 (NPCSA) are mitochondrial intermembrane. A helical transmembrane segment spans residues 91 to 111 (MDYSLAAALTLHGHWGLGQVV). Position 102 (His102) interacts with heme b. Over 112 to 122 (TDYVHGDALQK) the chain is Mitochondrial matrix. Position 114 (Tyr114) interacts with a ubiquinone. Residues 123–144 (AAKAGLLALSALTFAGLCYFNY) form a helical membrane-spanning segment. Over 145–159 (HDVGICKAVAMLWKL) the chain is Mitochondrial intermembrane.

The protein belongs to the CybS family. As to quaternary structure, component of complex II composed of four subunits: the flavoprotein (FP) SDHA, iron-sulfur protein (IP) SDHB, and a cytochrome b560 composed of SDHC and SDHD.

Its subcellular location is the mitochondrion inner membrane. Its pathway is carbohydrate metabolism; tricarboxylic acid cycle. Functionally, membrane-anchoring subunit of succinate dehydrogenase (SDH) that is involved in complex II of the mitochondrial electron transport chain and is responsible for transferring electrons from succinate to ubiquinone (coenzyme Q). SDH also oxidizes malate to the non-canonical enol form of oxaloacetate, enol-oxaloacetate. Enol-oxaloacetate, which is a potent inhibitor of the succinate dehydrogenase activity, is further isomerized into keto-oxaloacetate. In Homo sapiens (Human), this protein is Succinate dehydrogenase [ubiquinone] cytochrome b small subunit, mitochondrial (SDHD).